The following is a 343-amino-acid chain: Zinc finger protein Gfi-1b (343 aa).

The mediates repression of transcription stretch occupies residues 1–20 (MPRSFLVKSKKTHTYNQHRY). Residues 1 to 20 (MPRSFLVKSKKTHTYNQHRY) are SNAG domain. The segment at 51-77 (STDPTEKQHTPENVITEEARSDPGDPR) is disordered. The span at 67–77 (EEARSDPGDPR) shows a compositional bias: basic and acidic residues. C2H2-type zinc fingers lie at residues 176 to 199 (YHCVKCSKVFSTSHGLEVHVRRSH), 205 to 227 (FVCNICGKSFGHAVSLEQHLNVH), 233 to 255 (FECKMCGKTFKRSSTLSTHLLIH), 261 to 283 (YPCQFCGKRFHQKSDMKKHTYIH), 289 to 311 (HKCQVCGKAFSQSSNLITHSRKH), and 317 to 340 (FSCDLCCKGFQRKVDLRRHRENQH).

It is found in the nucleus. Essential transcriptional regulator necessary for development and differentiation of erythroid and megakaryocytic lineages. Alters histone methylation by recruiting histone methyltransferase to target genes promoters. Plays a role in heterochromatin formation. In Xenopus laevis (African clawed frog), this protein is Zinc finger protein Gfi-1b (gfi1b).